Consider the following 132-residue polypeptide: Small ribosomal subunit protein uS8 (132 aa).

The protein belongs to the universal ribosomal protein uS8 family. Part of the 30S ribosomal subunit. Contacts proteins S5 and S12.

One of the primary rRNA binding proteins, it binds directly to 16S rRNA central domain where it helps coordinate assembly of the platform of the 30S subunit. The sequence is that of Small ribosomal subunit protein uS8 from Nocardia farcinica (strain IFM 10152).